We begin with the raw amino-acid sequence, 211 residues long: Protein-L-isoaspartate O-methyltransferase 1 (211 aa).

Serine 62 is an active-site residue.

This sequence belongs to the methyltransferase superfamily. L-isoaspartyl/D-aspartyl protein methyltransferase family.

The protein localises to the cytoplasm. It catalyses the reaction [protein]-L-isoaspartate + S-adenosyl-L-methionine = [protein]-L-isoaspartate alpha-methyl ester + S-adenosyl-L-homocysteine. Catalyzes the methyl esterification of L-isoaspartyl residues in peptides and proteins that result from spontaneous decomposition of normal L-aspartyl and L-asparaginyl residues. It plays a role in the repair and/or degradation of damaged proteins. The polypeptide is Protein-L-isoaspartate O-methyltransferase 1 (Shewanella sediminis (strain HAW-EB3)).